The chain runs to 494 residues: UPF0371 protein spyM18_1356 (494 aa).

This sequence belongs to the UPF0371 family.

The protein is UPF0371 protein spyM18_1356 of Streptococcus pyogenes serotype M18 (strain MGAS8232).